We begin with the raw amino-acid sequence, 434 residues long: Histidinol dehydrogenase (434 aa).

NAD(+) contacts are provided by Y130, Q191, and N214. Substrate is bound by residues S237, Q259, and H262. Residues Q259 and H262 each contribute to the Zn(2+) site. Residues E327 and H328 each act as proton acceptor in the active site. Positions 328, 361, 415, and 420 each coordinate substrate. Position 361 (D361) interacts with Zn(2+). H420 serves as a coordination point for Zn(2+).

The protein belongs to the histidinol dehydrogenase family. Zn(2+) serves as cofactor.

The enzyme catalyses L-histidinol + 2 NAD(+) + H2O = L-histidine + 2 NADH + 3 H(+). The protein operates within amino-acid biosynthesis; L-histidine biosynthesis; L-histidine from 5-phospho-alpha-D-ribose 1-diphosphate: step 9/9. Catalyzes the sequential NAD-dependent oxidations of L-histidinol to L-histidinaldehyde and then to L-histidine. This chain is Histidinol dehydrogenase, found in Chromobacterium violaceum (strain ATCC 12472 / DSM 30191 / JCM 1249 / CCUG 213 / NBRC 12614 / NCIMB 9131 / NCTC 9757 / MK).